Here is a 124-residue protein sequence, read N- to C-terminus: Small ribosomal subunit protein uS12 (124 aa).

At Asp-89 the chain carries 3-methylthioaspartic acid.

This sequence belongs to the universal ribosomal protein uS12 family. Part of the 30S ribosomal subunit. Contacts proteins S8 and S17. May interact with IF1 in the 30S initiation complex.

Functionally, with S4 and S5 plays an important role in translational accuracy. In terms of biological role, interacts with and stabilizes bases of the 16S rRNA that are involved in tRNA selection in the A site and with the mRNA backbone. Located at the interface of the 30S and 50S subunits, it traverses the body of the 30S subunit contacting proteins on the other side and probably holding the rRNA structure together. The combined cluster of proteins S8, S12 and S17 appears to hold together the shoulder and platform of the 30S subunit. The sequence is that of Small ribosomal subunit protein uS12 from Koribacter versatilis (strain Ellin345).